The chain runs to 337 residues: Large ribosomal subunit protein uL3 (337 aa).

The disordered stretch occupies residues 1–32; it reads MAKGHRPRRGSLAYSPRKRSQSHIPRFRSWPE.

Belongs to the universal ribosomal protein uL3 family. As to quaternary structure, part of the 50S ribosomal subunit. Forms a cluster with proteins L14 and L24e.

Functionally, one of the primary rRNA binding proteins, it binds directly near the 3'-end of the 23S rRNA, where it nucleates assembly of the 50S subunit. This is Large ribosomal subunit protein uL3 from Methanococcoides burtonii (strain DSM 6242 / NBRC 107633 / OCM 468 / ACE-M).